The sequence spans 370 residues: Alanine racemase (370 aa).

Lysine 36 serves as the catalytic Proton acceptor; specific for D-alanine. Lysine 36 is modified (N6-(pyridoxal phosphate)lysine). Arginine 134 provides a ligand contact to substrate. Catalysis depends on tyrosine 265, which acts as the Proton acceptor; specific for L-alanine. Methionine 313 contacts substrate.

Belongs to the alanine racemase family. Requires pyridoxal 5'-phosphate as cofactor.

It carries out the reaction L-alanine = D-alanine. It functions in the pathway amino-acid biosynthesis; D-alanine biosynthesis; D-alanine from L-alanine: step 1/1. Its function is as follows. Catalyzes the interconversion of L-alanine and D-alanine. May also act on other amino acids. In Desulforamulus reducens (strain ATCC BAA-1160 / DSM 100696 / MI-1) (Desulfotomaculum reducens), this protein is Alanine racemase (alr).